The primary structure comprises 150 residues: Putative biopolymer transport protein ExbB-like 2 (150 aa).

3 helical membrane-spanning segments follow: residues 5 to 25 (VDYG…AIAI), 63 to 83 (APYI…MDLG), and 97 to 117 (LALA…AIVI).

This sequence belongs to the ExbB/TolQ family.

The protein localises to the cell inner membrane. The chain is Putative biopolymer transport protein ExbB-like 2 from Helicobacter pylori (strain ATCC 700392 / 26695) (Campylobacter pylori).